A 343-amino-acid chain; its full sequence is Lipase chaperone (343 aa).

Residues 7–27 (IYLGIGLVALLMIFIYWLMPK) form a helical membrane-spanning segment.

The protein belongs to the lipase chaperone family.

Its subcellular location is the cell inner membrane. Its function is as follows. May be involved in the folding of the extracellular lipase during its passage through the periplasm. The protein is Lipase chaperone (lifO) of Acinetobacter baylyi (strain ATCC 33305 / BD413 / ADP1).